A 444-amino-acid chain; its full sequence is uncharacterized protein (444 aa).

A run of 12 helical transmembrane segments spans residues 2-22 (PILI…KVKL), 24-44 (TFVS…MDIN), 52-72 (TGIG…AMLG), 106-126 (FIIG…PIVY), 134-154 (MPFL…HGFL), 174-194 (VLLF…PLFN), 228-248 (FAIS…ATIF), 261-281 (IIEF…LALY), 305-325 (IAMM…LIDG), 343-363 (LFVA…ATVA), 377-397 (AGSV…VIAC), and 424-444 (LLTT…GLVM).

It belongs to the GntP permease family.

It is found in the cell membrane. This is an uncharacterized protein from Bacillus subtilis (strain 168).